A 132-amino-acid chain; its full sequence is Agouti-signaling protein (132 aa).

A signal peptide spans 1-22; sequence MDVTRLLLATLLVFLCFFTAYS. N-linked (GlcNAc...) asparagine glycosylation occurs at Asn39. The interval 61–87 is disordered; it reads QISRKEAEKKRSSKKEASMKKVARPRT. Residues 63 to 79 are compositionally biased toward basic and acidic residues; the sequence is SRKEAEKKRSSKKEASM. 5 disulfide bridges follow: Cys93/Cys108, Cys100/Cys114, Cys107/Cys125, Cys111/Cys132, and Cys116/Cys123. Positions 93-132 constitute an Agouti domain; sequence CVATRDSCKPPAPACCDPCASCQCRFFRSACSCRVLSLNC.

It is found in the secreted. Involved in the regulation of melanogenesis. The binding of ASP to MC1R precludes alpha-MSH initiated signaling and thus blocks production of cAMP, leading to a down-regulation of eumelanogenesis (brown/black pigment) and thus increasing synthesis of pheomelanin (yellow/red pigment). The sequence is that of Agouti-signaling protein (ASIP) from Macaca maura (Moor macaque).